The chain runs to 182 residues: Fucoxanthin-chlorophyll a-c binding protein D, chloroplastic (182 aa).

The transit peptide at 1–4 directs the protein to the chloroplast; it reads AMKM. Helical transmembrane passes span 46–66, 87–107, and 148–168; these read IAML…PGML, IPPG…LAVM, and GRAA…NNKP.

It belongs to the fucoxanthin chlorophyll protein family. As to quaternary structure, the LHC complex of chromophytic algae is composed of fucoxanthin, chlorophyll A and C bound non-covalently by fucoxanthin chlorophyll proteins (FCPs). The ratio of pigments in this LHC is; fucoxanthin: chlorophyll C: chlorophyll A; (0.6-1): (0.1-0.3): (1).

The protein resides in the plastid. The protein localises to the chloroplast thylakoid membrane. Its function is as follows. The light-harvesting complex (LHC) functions as a light receptor, it captures and delivers excitation energy to photosystems with which it is closely associated. Energy is transferred from the carotenoid and chlorophyll C (or B) to chlorophyll A and the photosynthetic reaction centers where it is used to synthesize ATP and reducing power. The chain is Fucoxanthin-chlorophyll a-c binding protein D, chloroplastic (FCPD) from Macrocystis pyrifera (Giant kelp).